Here is a 198-residue protein sequence, read N- to C-terminus: Nucleoid occlusion factor SlmA (198 aa).

Residues 10-70 (NRREEILQSL…SLIEFIEDSL (61 aa)) form the HTH tetR-type domain. A DNA-binding region (H-T-H motif) is located at residues 33 to 52 (TTAKLAASVGVSEAALYRHF). Residues 119-144 (DRLQGRINQLFERIEVQLRQVMREKK) adopt a coiled-coil conformation.

It belongs to the nucleoid occlusion factor SlmA family. As to quaternary structure, homodimer. Interacts with FtsZ.

The protein resides in the cytoplasm. Its subcellular location is the nucleoid. Functionally, required for nucleoid occlusion (NO) phenomenon, which prevents Z-ring formation and cell division over the nucleoid. Acts as a DNA-associated cell division inhibitor that binds simultaneously chromosomal DNA and FtsZ, and disrupts the assembly of FtsZ polymers. SlmA-DNA-binding sequences (SBS) are dispersed on non-Ter regions of the chromosome, preventing FtsZ polymerization at these regions. This chain is Nucleoid occlusion factor SlmA, found in Klebsiella pneumoniae (strain 342).